Consider the following 332-residue polypeptide: Phenylalanine--tRNA ligase alpha subunit (332 aa).

Glu252 is a Mg(2+) binding site.

It belongs to the class-II aminoacyl-tRNA synthetase family. Phe-tRNA synthetase alpha subunit type 1 subfamily. Tetramer of two alpha and two beta subunits. Mg(2+) serves as cofactor.

The protein resides in the cytoplasm. It catalyses the reaction tRNA(Phe) + L-phenylalanine + ATP = L-phenylalanyl-tRNA(Phe) + AMP + diphosphate + H(+). This is Phenylalanine--tRNA ligase alpha subunit from Marinobacter nauticus (strain ATCC 700491 / DSM 11845 / VT8) (Marinobacter aquaeolei).